The following is a 297-amino-acid chain: Phosphatidylserine decarboxylase proenzyme (297 aa).

Catalysis depends on charge relay system; for autoendoproteolytic cleavage activity residues Asp-90, His-147, and Ser-252. Ser-252 functions as the Schiff-base intermediate with substrate; via pyruvic acid; for decarboxylase activity in the catalytic mechanism. Ser-252 is subject to Pyruvic acid (Ser); by autocatalysis.

This sequence belongs to the phosphatidylserine decarboxylase family. PSD-B subfamily. Prokaryotic type I sub-subfamily. As to quaternary structure, heterodimer of a large membrane-associated beta subunit and a small pyruvoyl-containing alpha subunit. The cofactor is pyruvate. Post-translationally, is synthesized initially as an inactive proenzyme. Formation of the active enzyme involves a self-maturation process in which the active site pyruvoyl group is generated from an internal serine residue via an autocatalytic post-translational modification. Two non-identical subunits are generated from the proenzyme in this reaction, and the pyruvate is formed at the N-terminus of the alpha chain, which is derived from the carboxyl end of the proenzyme. The autoendoproteolytic cleavage occurs by a canonical serine protease mechanism, in which the side chain hydroxyl group of the serine supplies its oxygen atom to form the C-terminus of the beta chain, while the remainder of the serine residue undergoes an oxidative deamination to produce ammonia and the pyruvoyl prosthetic group on the alpha chain. During this reaction, the Ser that is part of the protease active site of the proenzyme becomes the pyruvoyl prosthetic group, which constitutes an essential element of the active site of the mature decarboxylase.

Its subcellular location is the cell membrane. The catalysed reaction is a 1,2-diacyl-sn-glycero-3-phospho-L-serine + H(+) = a 1,2-diacyl-sn-glycero-3-phosphoethanolamine + CO2. It functions in the pathway phospholipid metabolism; phosphatidylethanolamine biosynthesis; phosphatidylethanolamine from CDP-diacylglycerol: step 2/2. In terms of biological role, catalyzes the formation of phosphatidylethanolamine (PtdEtn) from phosphatidylserine (PtdSer). This chain is Phosphatidylserine decarboxylase proenzyme, found in Stutzerimonas stutzeri (strain A1501) (Pseudomonas stutzeri).